The chain runs to 509 residues: Cytochrome P450 6A1 (509 aa).

Cys-449 provides a ligand contact to heme.

Belongs to the cytochrome P450 family. It depends on heme as a cofactor.

The protein localises to the endoplasmic reticulum membrane. Its subcellular location is the microsome membrane. The catalysed reaction is an organic molecule + reduced [NADPH--hemoprotein reductase] + O2 = an alcohol + oxidized [NADPH--hemoprotein reductase] + H2O + H(+). In terms of biological role, involved in the metabolism of insect hormones and in the breakdown of synthetic insecticides. The sequence is that of Cytochrome P450 6A1 (CYP6A1) from Musca domestica (House fly).